We begin with the raw amino-acid sequence, 447 residues long: Rab GDP dissociation inhibitor alpha (447 aa).

This sequence belongs to the Rab GDI family. As to quaternary structure, interacts with RHOH. Interacts with the non-phosphorylated forms of RAB1A, RAB3A, RAB5A, RAB5B, RAB5C, RAB8A, RAB8B, RAB10, RAB12, RAB35, and RAB43. Brain; predominant in neural and sensory tissues.

It is found in the cytoplasm. The protein localises to the golgi apparatus. It localises to the trans-Golgi network. Regulates the GDP/GTP exchange reaction of most Rab proteins by inhibiting the dissociation of GDP from them, and the subsequent binding of GTP to them. Promotes the dissociation of GDP-bound Rab proteins from the membrane and inhibits their activation. Promotes the dissociation of RAB1A, RAB3A, RAB5A and RAB10 from membranes. The chain is Rab GDP dissociation inhibitor alpha (GDI1) from Homo sapiens (Human).